Reading from the N-terminus, the 297-residue chain is Formamidopyrimidine-DNA glycosylase (297 aa).

The active-site Schiff-base intermediate with DNA is the Pro-2. The active-site Proton donor is the Glu-3. Residue Lys-58 is the Proton donor; for beta-elimination activity of the active site. Residues His-106, Arg-133, and Arg-178 each coordinate DNA. The FPG-type zinc-finger motif lies at 263-297 (FVYDRAGEPCRICGTPIRQILQGQRSTFYCPHCQH). The Proton donor; for delta-elimination activity role is filled by Arg-287.

The protein belongs to the FPG family. Monomer. Zn(2+) is required as a cofactor.

It catalyses the reaction Hydrolysis of DNA containing ring-opened 7-methylguanine residues, releasing 2,6-diamino-4-hydroxy-5-(N-methyl)formamidopyrimidine.. It carries out the reaction 2'-deoxyribonucleotide-(2'-deoxyribose 5'-phosphate)-2'-deoxyribonucleotide-DNA = a 3'-end 2'-deoxyribonucleotide-(2,3-dehydro-2,3-deoxyribose 5'-phosphate)-DNA + a 5'-end 5'-phospho-2'-deoxyribonucleoside-DNA + H(+). Functionally, involved in base excision repair of DNA damaged by oxidation or by mutagenic agents. Acts as a DNA glycosylase that recognizes and removes damaged bases. Has a preference for oxidized purines, such as 7,8-dihydro-8-oxoguanine (8-oxoG). Has AP (apurinic/apyrimidinic) lyase activity and introduces nicks in the DNA strand. Cleaves the DNA backbone by beta-delta elimination to generate a single-strand break at the site of the removed base with both 3'- and 5'-phosphates. The protein is Formamidopyrimidine-DNA glycosylase of Cupriavidus metallidurans (strain ATCC 43123 / DSM 2839 / NBRC 102507 / CH34) (Ralstonia metallidurans).